The following is a 432-amino-acid chain: Tryptophan--tRNA ligase, cytoplasmic (432 aa).

Residues 111–120 (PSSDSMHLGH) carry the 'HIGH' region motif. Residues 295 to 299 (KMSAS) carry the 'KMSKS' region motif.

The protein belongs to the class-I aminoacyl-tRNA synthetase family. Homodimer.

It is found in the cytoplasm. It catalyses the reaction tRNA(Trp) + L-tryptophan + ATP = L-tryptophyl-tRNA(Trp) + AMP + diphosphate + H(+). The sequence is that of Tryptophan--tRNA ligase, cytoplasmic (WRS1) from Saccharomyces cerevisiae (strain ATCC 204508 / S288c) (Baker's yeast).